Here is a 388-residue protein sequence, read N- to C-terminus: Staphopain A (388 aa).

The first 25 residues, 1–25, serve as a signal peptide directing secretion; it reads MKRNFPKLIALSLILSLSVTPIANA. The propeptide occupies 26–214; that stretch reads ESNSNIKAKD…TSQFKSNNYT (189 aa). Active-site residues include Cys-238, His-334, and Asn-355.

This sequence belongs to the peptidase C47 family. As to quaternary structure, in the cytoplasm, prematurely activated/folded ScpA forms a stable non-covalent complex with ScpB. Post-translationally, cleavage leads to the activation of ScpA probably by an auto-catalytic manner.

It localises to the secreted. The catalysed reaction is Broad endopeptidase action on proteins including elastin, but rather limited hydrolysis of small-molecule substrates. Assays are conveniently made with hemoglobin, casein or Z-Phe-Arg-NHMec as substrate.. With respect to regulation, prematurely activated/folded staphopain A is inhibited by staphostatin A (ScpB), which is probably required to protect staphylococcal cytoplasmic proteins from degradation by ScpA. In terms of biological role, cysteine protease that plays an important role in the inhibition of host innate immune response. Cleaves host elastins found in connective tissues, pulmonary surfactant protein A in the lungs, and the chemokine receptor CXCR2 on leukocytes. Proteolytic cleavage of surfactant protein A impairs bacterial phagocytosis by neutrophils while CXCR2 degradation blocks neutrophil activation and chemotaxis. Additionally, promotes vascular leakage by activating the plasma kallikerin/kinin system, resulting in hypotension. This chain is Staphopain A (sspP), found in Staphylococcus aureus (strain MSSA476).